We begin with the raw amino-acid sequence, 1403 residues long: Envelopment polyprotein (1403 aa).

A signal peptide spans 1-17 (MLLNIVLISNLACLAFA). At 18–209 (LPLKEGTRGS…ELMIESFCTN (192 aa)) the chain is on the lumenal side. N-linked (GlcNAc...) asparagine; by host glycosylation occurs at Asn-40. Residues 210-230 (LELILLVTFILVGSVMMMILT) traverse the membrane as a helical segment. Residues 231–314 (KTYIVYVFIP…PKTRKLCKSK (84 aa)) lie on the Cytoplasmic side of the membrane. The chain crosses the membrane as a helical span at residues 315–335 (ISNIVLCVITSLIFFSFITPI). Residues 336-361 (SSQCIDIEKLPDEYITCKRELANIKS) are Lumenal-facing. Residues 362-382 (LTIDDTYSFIYSCTCIIVLIL) traverse the membrane as a helical segment. At 383–448 (LKKAAKYILY…FKFESSYNRT (66 aa)) the chain is on the cytoplasmic side. Residues 449 to 469 (GLIIFMLLLVPTIVMTQETSI) traverse the membrane as a helical segment. The Lumenal portion of the chain corresponds to 470 to 1361 (NCKNIQSTQL…GNLSFYWRLT (892 aa)). Cysteines 471 and 487 form a disulfide. Asn-493 carries N-linked (GlcNAc...) asparagine; by host glycosylation. Cystine bridges form between Cys-523–Cys-550, Cys-580–Cys-589, and Cys-591–Cys-598. N-linked (GlcNAc...) asparagine; by host glycans are attached at residues Asn-686 and Asn-1353. The helical transmembrane segment at 1362–1382 (IYIIISLIMLILFLYILIPLC) threads the bilayer. The Cytoplasmic portion of the chain corresponds to 1383–1403 (KRLKGLLEYNERIYQMENKFK).

This sequence belongs to the nairovirus envelope glycoprotein family. Heterodimer with glycoprotein C; in prefusion state. In terms of assembly, heterodimer with glycoprotein N; in prefusion state. Homotrimeric; in postfusion state. Post-translationally, specific enzymatic cleavage by host MBTPS1/S1P/SKI-1 endopeptidase yield glycoprotein N. Specific enzymatic cleavages by host furin-like protease and MBTPS1/S1P endopeptidase yield GP38. Glycosylated.

The protein localises to the host endoplasmic reticulum membrane. It is found in the virion membrane. The protein resides in the host Golgi apparatus membrane. In terms of biological role, glycoprotein C and glycoprotein N interact with each other and are present at the surface of the virion. Glycoprotein N probably locks the Gn-Gc complex in a prefusion state. Glycoprotein N and glycoprotein C are able to attach the virion to host cell receptors. This attachment induces virion internalization predominantly through clathrin-dependent endocytosis. Glycoprotein C and glycoprotein N interact with each other and are present at the surface of the virion. The spikes at the surface of the virion are formed by an N-terminal extension of glycoprotein C. Glycoprotein N and glycoprotein C are able to attach the virion to host cell receptors. This attachment induces virion internalization predominantly through clathrin-dependent endocytosis. Class II fusion protein that promotes fusion of viral membrane with host endosomal membrane after endocytosis of the virion. Exposure to potassium is necessary for the conformational change leading to fusion. This chain is Envelopment polyprotein (GP), found in Bos taurus (Bovine).